Here is a 762-residue protein sequence, read N- to C-terminus: Cellulose synthase-like protein H2 (762 aa).

The segment covering 1–15 has biased composition (low complexity); the sequence is MAVVAAAAATGSTTR. The disordered stretch occupies residues 1–39; sequence MAVVAAAAATGSTTRSGGGGGEGTRSGRKKPPPPPLQER. 2 helical membrane-spanning segments follow: residues 47–67 and 81–101; these read AWAW…LLAL and GVWR…ALNV. Catalysis depends on residues aspartate 180 and aspartate 470. The next 6 helical transmembrane spans lie at 541–561, 582–602, 619–639, 673–693, 708–728, and 739–759; these read LAYL…CYGL, FSVP…EYMA, IISV…SLGL, LPVF…VTVG, APGI…FPFV, and GIPW…VTFC.

It belongs to the glycosyltransferase 2 family. Plant cellulose synthase-like H subfamily.

The protein resides in the golgi apparatus membrane. In terms of biological role, thought to be a Golgi-localized beta-glycan synthase that polymerize the backbones of noncellulosic polysaccharides (hemicelluloses) of plant cell wall. The sequence is that of Cellulose synthase-like protein H2 (CSLH2) from Oryza sativa subsp. japonica (Rice).